A 1217-amino-acid polypeptide reads, in one-letter code: DNA-directed RNA polymerase subunit beta' (1217 aa).

Residues Cys60, Cys62, Cys75, and Cys78 each contribute to the Zn(2+) site. Asp449, Asp451, and Asp453 together coordinate Mg(2+). Zn(2+) contacts are provided by Cys821, Cys895, Cys902, and Cys905.

This sequence belongs to the RNA polymerase beta' chain family. In terms of assembly, the RNAP catalytic core consists of 2 alpha, 1 beta, 1 beta' and 1 omega subunit. When a sigma factor is associated with the core the holoenzyme is formed, which can initiate transcription. It depends on Mg(2+) as a cofactor. Zn(2+) is required as a cofactor.

The enzyme catalyses RNA(n) + a ribonucleoside 5'-triphosphate = RNA(n+1) + diphosphate. Functionally, DNA-dependent RNA polymerase catalyzes the transcription of DNA into RNA using the four ribonucleoside triphosphates as substrates. The chain is DNA-directed RNA polymerase subunit beta' from Lactobacillus helveticus (strain DPC 4571).